The following is a 1517-amino-acid chain: uncharacterized protein (1517 aa).

The segment covering 1-13 (MNQFPNQPGNFGQ) has biased composition (polar residues). The segment at 1–26 (MNQFPNQPGNFGQNYYKPVQGSIPAN) is disordered. N-linked (GlcNAc...) asparagine glycosylation is found at Asn35, Asn40, and Asn76. 5 helical membrane-spanning segments follow: residues 231-251 (AIDF…AVPI), 397-417 (AIGL…TVWC), 510-530 (FVPL…KDWI), 612-632 (PNIV…FFAL), and 720-740 (VFDC…VVLL). Asn917 is a glycosylation site (N-linked (GlcNAc...) asparagine). Transmembrane regions (helical) follow at residues 956 to 976 (FVYA…VPPL), 985 to 1005 (VPAF…VNSE), 1051 to 1071 (VKLD…AFWS), and 1114 to 1134 (GIGF…TYLL). The N-linked (GlcNAc...) asparagine glycan is linked to Asn1178. Residues 1261–1281 (PYALPLLDSGMVPVSTQLAIV) traverse the membrane as a helical segment. Residue Asn1321 is glycosylated (N-linked (GlcNAc...) asparagine). The next 2 helical transmembrane spans lie at 1353 to 1373 (APVV…TFEV) and 1408 to 1428 (VVVV…PVVI).

It to S.pombe SpAC22F3.04.

The protein resides in the membrane. This is an uncharacterized protein from Schizosaccharomyces pombe (strain 972 / ATCC 24843) (Fission yeast).